The following is a 168-amino-acid chain: Small ribosomal subunit protein uS9 (168 aa).

Residues 1-15 show a composition bias toward acidic residues; the sequence is MAQNEETTEAVEAEE. The disordered stretch occupies residues 1-34; the sequence is MAQNEETTEAVEAEETLTSYTSESGAAEAAAPKK.

Belongs to the universal ribosomal protein uS9 family.

This chain is Small ribosomal subunit protein uS9, found in Arthrobacter sp. (strain FB24).